Reading from the N-terminus, the 290-residue chain is 4-hydroxy-tetrahydrodipicolinate synthase (290 aa).

Residue Thr-44 participates in pyruvate binding. Tyr-132 functions as the Proton donor/acceptor in the catalytic mechanism. The Schiff-base intermediate with substrate role is filled by Lys-160. Ile-202 is a binding site for pyruvate.

It belongs to the DapA family. Homotetramer; dimer of dimers.

It localises to the cytoplasm. It carries out the reaction L-aspartate 4-semialdehyde + pyruvate = (2S,4S)-4-hydroxy-2,3,4,5-tetrahydrodipicolinate + H2O + H(+). It functions in the pathway amino-acid biosynthesis; L-lysine biosynthesis via DAP pathway; (S)-tetrahydrodipicolinate from L-aspartate: step 3/4. In terms of biological role, catalyzes the condensation of (S)-aspartate-beta-semialdehyde [(S)-ASA] and pyruvate to 4-hydroxy-tetrahydrodipicolinate (HTPA). In Geotalea uraniireducens (strain Rf4) (Geobacter uraniireducens), this protein is 4-hydroxy-tetrahydrodipicolinate synthase.